Consider the following 432-residue polypeptide: Bifunctional IPC transferase and DIPP synthase (432 aa).

A mobA-like NTP transferase region spans residues 3-225 (PERAVILAAG…RARRMLVRTA (223 aa)). Residues 9-11 (LAA), Lys22, and Glu113 each bind CTP. Glu113 is a Mg(2+) binding site. Residues 226-426 (VKGTGDGFVS…LTLYFVVKKV (201 aa)) form a CDP-alcohol phosphatidyltransferases region. 3 helical membrane passes run 264 to 284 (FLLGIISALTTLVSLPLAGIL), 337 to 356 (IWYFVALLALLGSVMVSYST), and 385 to 405 (VFLTMLFLLYQIAASIKALFL).

It in the N-terminal section; belongs to the MobA family. In the C-terminal section; belongs to the CDP-alcohol phosphatidyltransferase class-I family. The cofactor is Mg(2+).

It is found in the membrane. It catalyses the reaction 1D-myo-inositol 3-phosphate + CTP + H(+) = CDP-1L-myo-inositol + diphosphate. The catalysed reaction is CDP-1L-myo-inositol + 1D-myo-inositol 3-phosphate = bis(1L-myo-inositol) 3,1'-phosphate 1-phosphate + CMP + H(+). In terms of biological role, involved in biosynthesis of di-myo-inositol phosphate (DIP), a widespread organic solute in microorganisms adapted to hot environments. Catalyzes the condensation of CTP and L-myo-inositol-1-phosphate into CDP-L-myo-inositol, as well as the biosynthesis of di-myo-inositol-1,3'-phosphate-1'-phosphate (DIPP) from CDP-L-myo-inositol and L-myo-inositol-1-phosphate. In Thermococcus kodakarensis (strain ATCC BAA-918 / JCM 12380 / KOD1) (Pyrococcus kodakaraensis (strain KOD1)), this protein is Bifunctional IPC transferase and DIPP synthase.